Consider the following 260-residue polypeptide: Cytochrome c oxidase subunit 2 (260 aa).

The Mitochondrial intermembrane segment spans residues 1-41 (MIVLKWLFFTISPCDAAEPWQLGFQDAATPIMQGIIDLHHD). Residues 42 to 62 (IFFFLILILVFVLWILVRALW) form a helical membrane-spanning segment. Residues 63–86 (HFHYKKNAIPQRIVHGTTIEILWT) lie on the Mitochondrial matrix side of the membrane. The helical transmembrane segment at 87-107 (IFPSIILMFIAIPSFALLYSM) threads the bilayer. Over 108–260 (DEVVVDPAIT…NQLIPQTGEA (153 aa)) the chain is Mitochondrial intermembrane. Cu cation is bound by residues H187, C222, E224, C226, H230, and M233. Residue E224 participates in Mg(2+) binding.

It belongs to the cytochrome c oxidase subunit 2 family. As to quaternary structure, component of the cytochrome c oxidase (complex IV, CIV), a multisubunit enzyme composed of a catalytic core of 3 subunits and several supernumerary subunits. The complex exists as a monomer or a dimer and forms supercomplexes (SCs) in the inner mitochondrial membrane with ubiquinol-cytochrome c oxidoreductase (cytochrome b-c1 complex, complex III, CIII). The cofactor is Cu cation.

It is found in the mitochondrion inner membrane. It catalyses the reaction 4 Fe(II)-[cytochrome c] + O2 + 8 H(+)(in) = 4 Fe(III)-[cytochrome c] + 2 H2O + 4 H(+)(out). Component of the cytochrome c oxidase, the last enzyme in the mitochondrial electron transport chain which drives oxidative phosphorylation. The respiratory chain contains 3 multisubunit complexes succinate dehydrogenase (complex II, CII), ubiquinol-cytochrome c oxidoreductase (cytochrome b-c1 complex, complex III, CIII) and cytochrome c oxidase (complex IV, CIV), that cooperate to transfer electrons derived from NADH and succinate to molecular oxygen, creating an electrochemical gradient over the inner membrane that drives transmembrane transport and the ATP synthase. Cytochrome c oxidase is the component of the respiratory chain that catalyzes the reduction of oxygen to water. Electrons originating from reduced cytochrome c in the intermembrane space (IMS) are transferred via the dinuclear copper A center (CU(A)) of subunit 2 and heme A of subunit 1 to the active site in subunit 1, a binuclear center (BNC) formed by heme A3 and copper B (CU(B)). The BNC reduces molecular oxygen to 2 water molecules using 4 electrons from cytochrome c in the IMS and 4 protons from the mitochondrial matrix. The sequence is that of Cytochrome c oxidase subunit 2 (COX2) from Arabidopsis thaliana (Mouse-ear cress).